Reading from the N-terminus, the 110-residue chain is Large ribosomal subunit protein uL22 (110 aa).

This sequence belongs to the universal ribosomal protein uL22 family. Part of the 50S ribosomal subunit.

Its function is as follows. This protein binds specifically to 23S rRNA; its binding is stimulated by other ribosomal proteins, e.g. L4, L17, and L20. It is important during the early stages of 50S assembly. It makes multiple contacts with different domains of the 23S rRNA in the assembled 50S subunit and ribosome. Functionally, the globular domain of the protein is located near the polypeptide exit tunnel on the outside of the subunit, while an extended beta-hairpin is found that lines the wall of the exit tunnel in the center of the 70S ribosome. The polypeptide is Large ribosomal subunit protein uL22 (Haemophilus ducreyi (strain 35000HP / ATCC 700724)).